We begin with the raw amino-acid sequence, 552 residues long: Putative transport protein HAPS_0158 (552 aa).

The next 5 helical transmembrane spans lie at 4 to 24, 28 to 48, 65 to 85, 95 to 115, and 157 to 177; these read IALT…IGHI, GVSL…HFMT, FGLI…FFAS, AFAV…HKIF, and MGYA…MWLI. RCK C-terminal domains are found at residues 193–275 and 277–360; these read DSAT…ILGE and VNVS…IIGN. A run of 6 helical transmembrane segments spans residues 370–390, 393–413, 438–458, 463–483, 492–512, and 532–552; these read MLPI…PIYL, FPVA…LILA, IVLF…NTLL, LAWI…TGLV, YLSL…LAFA, and LVMF…WVAG.

The protein belongs to the AAE transporter (TC 2.A.81) family. YidE subfamily.

It is found in the cell membrane. In Glaesserella parasuis serovar 5 (strain SH0165) (Haemophilus parasuis), this protein is Putative transport protein HAPS_0158.